The primary structure comprises 199 residues: Holliday junction branch migration complex subunit RuvA (199 aa).

The tract at residues 1 to 63 (MIASVRGEVL…EDSMTLYGFT (63 aa)) is domain I. Residues 64–142 (DAETRDLFLT…AAGAAGAPAG (79 aa)) form a domain II region. The segment at 143–153 (AARNGHAVRGP) is flexible linker. The interval 153–199 (PVVEALVGLGFAAKQAEEATDKVLAAEPEAGTSGALRAALSLLGKSR) is domain III.

This sequence belongs to the RuvA family. Homotetramer. Forms an RuvA(8)-RuvB(12)-Holliday junction (HJ) complex. HJ DNA is sandwiched between 2 RuvA tetramers; dsDNA enters through RuvA and exits via RuvB. An RuvB hexamer assembles on each DNA strand where it exits the tetramer. Each RuvB hexamer is contacted by two RuvA subunits (via domain III) on 2 adjacent RuvB subunits; this complex drives branch migration. In the full resolvosome a probable DNA-RuvA(4)-RuvB(12)-RuvC(2) complex forms which resolves the HJ.

The protein localises to the cytoplasm. The RuvA-RuvB-RuvC complex processes Holliday junction (HJ) DNA during genetic recombination and DNA repair, while the RuvA-RuvB complex plays an important role in the rescue of blocked DNA replication forks via replication fork reversal (RFR). RuvA specifically binds to HJ cruciform DNA, conferring on it an open structure. The RuvB hexamer acts as an ATP-dependent pump, pulling dsDNA into and through the RuvAB complex. HJ branch migration allows RuvC to scan DNA until it finds its consensus sequence, where it cleaves and resolves the cruciform DNA. This chain is Holliday junction branch migration complex subunit RuvA, found in Mycobacterium avium (strain 104).